A 53-amino-acid chain; its full sequence is Sec-independent protein translocase protein TatA (53 aa).

A helical membrane pass occupies residues 1-21; the sequence is MGMSFSHLLIVLLIIFVLFGA.

It belongs to the TatA/E family. In terms of assembly, the Tat system comprises two distinct complexes: a TatABC complex, containing multiple copies of TatA, TatB and TatC subunits, and a separate TatA complex, containing only TatA subunits. Substrates initially bind to the TatABC complex, which probably triggers association of the separate TatA complex to form the active translocon.

It is found in the cell inner membrane. Its function is as follows. Part of the twin-arginine translocation (Tat) system that transports large folded proteins containing a characteristic twin-arginine motif in their signal peptide across membranes. TatA could form the protein-conducting channel of the Tat system. The sequence is that of Sec-independent protein translocase protein TatA from Rickettsia rickettsii (strain Iowa).